The chain runs to 345 residues: Protease HtpX homolog (345 aa).

2 helical membrane passes run 6 to 26 (TAML…LVGG) and 27 to 47 (SNGM…SYWN). His-130 is a binding site for Zn(2+). Residue Glu-131 is part of the active site. His-134 is a binding site for Zn(2+). Transmembrane regions (helical) follow at residues 145–165 (LTAT…FMGG) and 179–199 (IGGL…QMAI). A Zn(2+)-binding site is contributed by Glu-204.

This sequence belongs to the peptidase M48B family. Requires Zn(2+) as cofactor.

The protein resides in the cell inner membrane. The sequence is that of Protease HtpX homolog from Bartonella henselae (strain ATCC 49882 / DSM 28221 / CCUG 30454 / Houston 1) (Rochalimaea henselae).